Reading from the N-terminus, the 117-residue chain is Small ribosomal subunit protein bS16 (117 aa).

The segment covering 81–90 (LKKRPNRNNP) has biased composition (basic residues). Residues 81–117 (LKKRPNRNNPHKGQPGKKAQERISAAKQVAEAESAPV) form a disordered region.

Belongs to the bacterial ribosomal protein bS16 family.

This is Small ribosomal subunit protein bS16 from Bartonella quintana (strain Toulouse) (Rochalimaea quintana).